The sequence spans 127 residues: Small ribosomal subunit protein uS13 (127 aa).

Positions 95–127 are disordered; it reads GLPLRGQRTKTNARTRRGKKGAAIGGKKKATKK.

It belongs to the universal ribosomal protein uS13 family. As to quaternary structure, part of the 30S ribosomal subunit. Forms a loose heterodimer with protein S19. Forms two bridges to the 50S subunit in the 70S ribosome.

In terms of biological role, located at the top of the head of the 30S subunit, it contacts several helices of the 16S rRNA. In the 70S ribosome it contacts the 23S rRNA (bridge B1a) and protein L5 of the 50S subunit (bridge B1b), connecting the 2 subunits; these bridges are implicated in subunit movement. Contacts the tRNAs in the A and P-sites. The chain is Small ribosomal subunit protein uS13 from Herpetosiphon aurantiacus (strain ATCC 23779 / DSM 785 / 114-95).